The primary structure comprises 568 residues: Urease subunit alpha (568 aa).

Residues 130–568 enclose the Urease domain; sequence GGIDTHIHFI…LPMAQRYFLF (439 aa). Residues histidine 135, histidine 137, and lysine 218 each contribute to the Ni(2+) site. Position 218 is an N6-carboxylysine (lysine 218). Residue histidine 220 participates in substrate binding. Residues histidine 247 and histidine 273 each coordinate Ni(2+). The Proton donor role is filled by histidine 321. Ni(2+) is bound at residue aspartate 361.

The protein belongs to the metallo-dependent hydrolases superfamily. Urease alpha subunit family. In terms of assembly, heterotrimer of UreA (gamma), UreB (beta) and UreC (alpha) subunits. Three heterotrimers associate to form the active enzyme. The cofactor is Ni cation. In terms of processing, carboxylation allows a single lysine to coordinate two nickel ions.

The protein localises to the cytoplasm. It catalyses the reaction urea + 2 H2O + H(+) = hydrogencarbonate + 2 NH4(+). Its pathway is nitrogen metabolism; urea degradation; CO(2) and NH(3) from urea (urease route): step 1/1. This is Urease subunit alpha from Burkholderia cenocepacia (strain ATCC BAA-245 / DSM 16553 / LMG 16656 / NCTC 13227 / J2315 / CF5610) (Burkholderia cepacia (strain J2315)).